A 553-amino-acid chain; its full sequence is tRNA pseudouridine synthase 1 (553 aa).

A disordered region spans residues 1–78 (MSEEQNLRPV…ETRSKDKDES (78 aa)). Basic and acidic residues-rich tracts occupy residues 33-51 (RKAD…KPND) and 64-78 (SNEK…KDES). Aspartate 158 serves as the catalytic Nucleophile. A disordered region spans residues 517-539 (DLEQKAPSDPTPSDEKGKKPQRP).

It belongs to the tRNA pseudouridine synthase TruA family. The cofactor is Zn(2+).

It is found in the nucleus. It carries out the reaction a uridine in tRNA = a pseudouridine in tRNA. The catalysed reaction is uridine in snRNA = pseudouridine in snRNA. It catalyses the reaction a uridine in mRNA = a pseudouridine in mRNA. In terms of biological role, formation of pseudouridine at positions 27 and 28 in the anticodon stem and loop of transfer RNAs; at positions 34 and 36 of intron-containing precursor tRNA(Ile) and at position 35 in the intron-containing tRNA(Tyr). Catalyzes pseudouridylation at position 44 in U2 snRNA. Also catalyzes pseudouridylation of mRNAs. This is tRNA pseudouridine synthase 1 (PUS1) from Kluyveromyces lactis (strain ATCC 8585 / CBS 2359 / DSM 70799 / NBRC 1267 / NRRL Y-1140 / WM37) (Yeast).